A 477-amino-acid chain; its full sequence is 3-isopropylmalate dehydratase large subunit (477 aa).

The [4Fe-4S] cluster site is built by Cys-347, Cys-407, and Cys-410. The tract at residues 418-442 (LAPGERSASTSNRNFEGRQGKGGRT) is disordered.

This sequence belongs to the aconitase/IPM isomerase family. LeuC type 1 subfamily. As to quaternary structure, heterodimer of LeuC and LeuD. [4Fe-4S] cluster serves as cofactor.

It carries out the reaction (2R,3S)-3-isopropylmalate = (2S)-2-isopropylmalate. Its pathway is amino-acid biosynthesis; L-leucine biosynthesis; L-leucine from 3-methyl-2-oxobutanoate: step 2/4. Catalyzes the isomerization between 2-isopropylmalate and 3-isopropylmalate, via the formation of 2-isopropylmaleate. This is 3-isopropylmalate dehydratase large subunit from Streptomyces avermitilis (strain ATCC 31267 / DSM 46492 / JCM 5070 / NBRC 14893 / NCIMB 12804 / NRRL 8165 / MA-4680).